A 416-amino-acid chain; its full sequence is Alpha-1-antiproteinase (416 aa).

The N-terminal stretch at 1 to 24 (MALSITRGLLLLAALCCLAPTSLA) is a signal peptide. N-linked (GlcNAc...) asparagine glycosylation is found at Asn68, Asn105, Asn143, and Asn269. The interval 371-390 (GATFLEAIPMSLPPDVEFNR) is RCL. The residue at position 381 (Ser381) is a Phosphoserine.

The protein belongs to the serpin family. In terms of assembly, interacts with CELA2A. Interacts with ERGIC3 and LMAN1/ERGIC53. Interacts with PRSS1/Trypsin. As to expression, plasma.

It localises to the secreted. Its function is as follows. Inhibits human leukocyte elastase, pig pancreatic elastase and bovine trypsin on a 1:1 molar basis. In Ovis aries (Sheep), this protein is Alpha-1-antiproteinase.